The following is a 241-amino-acid chain: Uridylate kinase (241 aa).

15 to 18 (KLSG) contributes to the ATP binding site. Residue G57 participates in UMP binding. ATP is bound by residues G58 and R62. UMP contacts are provided by residues D77 and 139-146 (IGHTLFTT). Positions 166, 167, 172, and 175 each coordinate ATP.

It belongs to the UMP kinase family. Homohexamer.

Its subcellular location is the cytoplasm. It carries out the reaction UMP + ATP = UDP + ADP. The protein operates within pyrimidine metabolism; CTP biosynthesis via de novo pathway; UDP from UMP (UMPK route): step 1/1. With respect to regulation, inhibited by UTP. Functionally, catalyzes the reversible phosphorylation of UMP to UDP. The sequence is that of Uridylate kinase from Wigglesworthia glossinidia brevipalpis.